The chain runs to 235 residues: uncharacterized protein (235 aa).

The 68-residue stretch at 2-69 (CRLAKIISNA…KPRLWIYYKP (68 aa)) folds into the S4 RNA-binding domain. The Nucleophile role is filled by Asp-102.

This sequence belongs to the pseudouridine synthase RsuA family.

The catalysed reaction is a uridine in RNA = a pseudouridine in RNA. This is an uncharacterized protein from Rickettsia prowazekii (strain Madrid E).